A 507-amino-acid chain; its full sequence is RNA-splicing ligase RtcB homolog (507 aa).

Mn(2+) is bound by residues Asp-121, Cys-124, His-229, His-261, and His-355. Asn-228–Glu-232 contacts GMP. Residues His-355–Asn-356, Gly-404–Met-407, Ser-411, His-430–Gly-433, and Lys-506 each bind GMP. The GMP-histidine intermediate role is filled by His-430.

It belongs to the RtcB family. In terms of assembly, catalytic component of the tRNA-splicing ligase complex. Mn(2+) serves as cofactor.

The enzyme catalyses a 3'-end 3'-phospho-ribonucleotide-RNA + a 5'-end dephospho-ribonucleoside-RNA + GTP = a ribonucleotidyl-ribonucleotide-RNA + GMP + diphosphate. The catalysed reaction is a 3'-end 2',3'-cyclophospho-ribonucleotide-RNA + a 5'-end dephospho-ribonucleoside-RNA + GTP + H2O = a ribonucleotidyl-ribonucleotide-RNA + GMP + diphosphate + H(+). Its function is as follows. Catalytic subunit of the tRNA-splicing ligase complex that acts by directly joining spliced tRNA halves to mature-sized tRNAs by incorporating the precursor-derived splice junction phosphate into the mature tRNA as a canonical 3',5'-phosphodiester. May act as an RNA ligase with broad substrate specificity, and may function toward other RNAs. The chain is RNA-splicing ligase RtcB homolog from Branchiostoma floridae (Florida lancelet).